Here is a 747-residue protein sequence, read N- to C-terminus: ESX-1 secretion system protein EccCa1 (747 aa).

The next 3 helical transmembrane spans lie at 41 to 61 (ILPY…VAGG), 65 to 85 (LSPY…GGLA), and 222 to 242 (FPTI…TAMI). Positions 456-665 (GNVMYLDIKE…LRTTSSHESK (210 aa)) constitute a FtsK domain. 479-486 (GTTGSGKS) contributes to the ATP binding site.

Part of the ESX-1 / type VII secretion system (T7SS), which is composed of cytosolic and membrane components. The ESX-1 membrane complex is composed of EccB1, EccCa1, EccCb1, EccD1 and EccE1.

It localises to the cell inner membrane. Its function is as follows. Part of the ESX-1 specialized secretion system, which delivers several virulence factors to host cells during infection, including the key virulence factors EsxA (ESAT-6) and EsxB (CFP-10). The sequence is that of ESX-1 secretion system protein EccCa1 from Mycobacterium tuberculosis (strain CDC 1551 / Oshkosh).